Here is a 144-residue protein sequence, read N- to C-terminus: NADH dehydrogenase [ubiquinone] 1 alpha subcomplex subunit 13 (144 aa).

A2 bears the N-acetylalanine mark. A helical membrane pass occupies residues 30 to 51 (LSGYSMLAIGIGTLIYGHWSIM). The interval 102-144 (PDWKVGESVFHTTRWVPPLIGELYGLRTTEEALHASHGFMWYT) is important for inducing cell death.

The protein belongs to the complex I NDUFA13 subunit family. As to quaternary structure, complex I is composed of 45 different subunits. Interacts with CARD15, but not with CARD4. Interacts with STAT3, but not with STAT1, STAT2 and STAT5A. Interacts with OLFM4. (Microbial infection) Interacts with HHV-8 IRF1, in the nucleus, with HPV-16 E6 and SV40 LT. In terms of tissue distribution, widely expressed, with highest expression in heart, skeletal muscle, liver, kidney and placenta. In intestinal mucosa, down-regulated in areas involved in Crohn disease and ulcerative colitis.

The protein localises to the mitochondrion inner membrane. It is found in the nucleus. In terms of biological role, accessory subunit of the mitochondrial membrane respiratory chain NADH dehydrogenase (Complex I), that is believed not to be involved in catalysis. Complex I functions in the transfer of electrons from NADH to the respiratory chain. The immediate electron acceptor for the enzyme is believed to be ubiquinone. Involved in the interferon/all-trans-retinoic acid (IFN/RA) induced cell death. This apoptotic activity is inhibited by interaction with viral IRF1. Prevents the transactivation of STAT3 target genes. May play a role in CARD15-mediated innate mucosal responses and serve to regulate intestinal epithelial cell responses to microbes. In Homo sapiens (Human), this protein is NADH dehydrogenase [ubiquinone] 1 alpha subcomplex subunit 13 (NDUFA13).